The chain runs to 310 residues: L-lactate dehydrogenase (310 aa).

Residues 10–11 (MV), Asp-32, Tyr-62, and 76–77 (GV) each bind NAD(+). Residues Gln-79, Arg-85, and 117–120 (NPVD) contribute to the substrate site. Residues 115-117 (ATN) and Ser-140 contribute to the NAD(+) site. Residue 145–148 (DTAR) coordinates substrate. Residues Arg-150 and His-165 each coordinate beta-D-fructose 1,6-bisphosphate. Residue His-172 is the Proton acceptor of the active site. Tyr-218 is subject to Phosphotyrosine. Thr-227 provides a ligand contact to substrate.

This sequence belongs to the LDH/MDH superfamily. LDH family. Homotetramer.

It localises to the cytoplasm. The catalysed reaction is (S)-lactate + NAD(+) = pyruvate + NADH + H(+). It participates in fermentation; pyruvate fermentation to lactate; (S)-lactate from pyruvate: step 1/1. With respect to regulation, allosterically activated by fructose 1,6-bisphosphate (FBP). Functionally, catalyzes the conversion of lactate to pyruvate. This chain is L-lactate dehydrogenase, found in Thermus thermophilus (strain ATCC 27634 / DSM 579 / HB8).